Consider the following 295-residue polypeptide: Bifunctional protein FolD (295 aa).

NADP(+) contacts are provided by residues Gly-172–Ser-174, Ser-197, and Ile-238.

It belongs to the tetrahydrofolate dehydrogenase/cyclohydrolase family. As to quaternary structure, homodimer.

It catalyses the reaction (6R)-5,10-methylene-5,6,7,8-tetrahydrofolate + NADP(+) = (6R)-5,10-methenyltetrahydrofolate + NADPH. It carries out the reaction (6R)-5,10-methenyltetrahydrofolate + H2O = (6R)-10-formyltetrahydrofolate + H(+). It functions in the pathway one-carbon metabolism; tetrahydrofolate interconversion. Functionally, catalyzes the oxidation of 5,10-methylenetetrahydrofolate to 5,10-methenyltetrahydrofolate and then the hydrolysis of 5,10-methenyltetrahydrofolate to 10-formyltetrahydrofolate. This is Bifunctional protein FolD from Rickettsia akari (strain Hartford).